Reading from the N-terminus, the 156-residue chain is Cyanate hydratase (156 aa).

Residues R96, E99, and S122 contribute to the active site.

This sequence belongs to the cyanase family.

It catalyses the reaction cyanate + hydrogencarbonate + 3 H(+) = NH4(+) + 2 CO2. Catalyzes the reaction of cyanate with bicarbonate to produce ammonia and carbon dioxide. The protein is Cyanate hydratase of Burkholderia orbicola (strain MC0-3).